The chain runs to 389 residues: cAMP-dependent protein kinase regulatory subunit (389 aa).

2 disordered regions span residues 1-57 (MSEN…KFAG) and 87-110 (SVSAESLNPNPTASSNESWTPPYH). The dimerization and phosphorylation stretch occupies residues 1 to 128 (MSENTFPGRL…RLKKSISGNF (128 aa)). Positions 21–31 (AANTEKPSTSH) are enriched in polar residues. Basic and acidic residues predominate over residues 34 to 43 (RVTERDEDKV). A Phosphoserine modification is found at Ser87. Over residues 87–105 (SVSAESLNPNPTASSNESW) the composition is skewed to polar residues. 3',5'-cyclic AMP is bound by residues 129-258 (LFNH…FLEE), Glu207, Arg216, 261-377 (LLST…GVEE), Glu327, and Arg336.

This sequence belongs to the cAMP-dependent kinase regulatory chain family. Tetramer, composed of 2 regulatory (R) and 2 catalytic (C) subunits. In the presence of cAMP it dissociates into 2 active monomeric C subunits and an R dimer.

The polypeptide is cAMP-dependent protein kinase regulatory subunit (pkar) (Blumeria graminis (Powdery mildew)).